The chain runs to 253 residues: Claudin domain-containing protein 1 (253 aa).

The chain crosses the membrane as a helical span at residues F5 to A25. N-linked (GlcNAc...) asparagine glycans are attached at residues N42 and N72. The next 3 helical transmembrane spans lie at F141–A161, I175–I195, and F216–A236.

It belongs to the PMP-22/EMP/MP20 family. Widely distributed in the adult CNS with highest expression in the corpus callosum, caudate nucleus, cerebral cortex, medulla, putamen, spinal cord, substantia nigra and subthalamic nucleus. Weak expression was detected in the adult heart.

It is found in the cell junction. The protein resides in the tight junction. Its subcellular location is the cell membrane. Plays a role in negatively regulating the permeability of cells to small molecules. This chain is Claudin domain-containing protein 1 (CLDND1), found in Homo sapiens (Human).